A 971-amino-acid polypeptide reads, in one-letter code: Isoleucine--tRNA ligase (971 aa).

Residues 64-74 (PYANGHIHIGH) carry the 'HIGH' region motif. E602 is a binding site for L-isoleucyl-5'-AMP. A 'KMSKS' region motif is present at residues 643 to 647 (KMSKS). K646 contributes to the ATP binding site.

Belongs to the class-I aminoacyl-tRNA synthetase family. IleS type 1 subfamily. Monomer.

Its subcellular location is the cytoplasm. It catalyses the reaction tRNA(Ile) + L-isoleucine + ATP = L-isoleucyl-tRNA(Ile) + AMP + diphosphate. Catalyzes the attachment of isoleucine to tRNA(Ile). As IleRS can inadvertently accommodate and process structurally similar amino acids such as valine, to avoid such errors it has two additional distinct tRNA(Ile)-dependent editing activities. One activity is designated as 'pretransfer' editing and involves the hydrolysis of activated Val-AMP. The other activity is designated 'posttransfer' editing and involves deacylation of mischarged Val-tRNA(Ile). The polypeptide is Isoleucine--tRNA ligase (Bartonella henselae (strain ATCC 49882 / DSM 28221 / CCUG 30454 / Houston 1) (Rochalimaea henselae)).